The chain runs to 582 residues: uncharacterized protein (582 aa).

6 helical membrane passes run 17–37 (VAML…LPTV), 57–77 (LGAV…GAVY), 131–151 (MTAT…IMAI), 156–176 (ALTW…YWII), 239–259 (ALML…LIWF), and 271–291 (VGSL…VLMA). The ABC transmembrane type-1 domain occupies 17–300 (VAMLMMLQLV…ATMTLAVLPR (284 aa)). The ABC transporter domain maps to 335-571 (VRLAGATFTY…CPTYAEFAAS (237 aa)). Residue 369–376 (GSTGSGKS) coordinates ATP.

This sequence belongs to the ABC transporter superfamily.

Its subcellular location is the cell membrane. This is an uncharacterized protein from Mycobacterium tuberculosis (strain CDC 1551 / Oshkosh).